The following is a 347-amino-acid chain: Phosphoribosylformylglycinamidine cyclo-ligase (347 aa).

The protein belongs to the AIR synthase family.

The protein resides in the cytoplasm. The catalysed reaction is 2-formamido-N(1)-(5-O-phospho-beta-D-ribosyl)acetamidine + ATP = 5-amino-1-(5-phospho-beta-D-ribosyl)imidazole + ADP + phosphate + H(+). It functions in the pathway purine metabolism; IMP biosynthesis via de novo pathway; 5-amino-1-(5-phospho-D-ribosyl)imidazole from N(2)-formyl-N(1)-(5-phospho-D-ribosyl)glycinamide: step 2/2. This Prochlorococcus marinus (strain MIT 9215) protein is Phosphoribosylformylglycinamidine cyclo-ligase.